Reading from the N-terminus, the 197-residue chain is RING-H2 finger protein ATL80 (197 aa).

The chain crosses the membrane as a helical span at residues 30-50; sequence LVVILAALLCALICVLGLIAV. The RING-type; atypical zinc-finger motif lies at 111-153; that stretch reads CAICLAEFSAGDELRVLPQCGHGFHVACIDTWLGSHSSCPSCR. The segment at 168–197 is disordered; it reads PGSSSSGLESEPEIEIRIKQGEDDPNSFLP.

Belongs to the RING-type zinc finger family. ATL subfamily.

It localises to the membrane. It catalyses the reaction S-ubiquitinyl-[E2 ubiquitin-conjugating enzyme]-L-cysteine + [acceptor protein]-L-lysine = [E2 ubiquitin-conjugating enzyme]-L-cysteine + N(6)-ubiquitinyl-[acceptor protein]-L-lysine.. It participates in protein modification; protein ubiquitination. In terms of biological role, may be involved in the early steps of the plant defense signaling pathway. The polypeptide is RING-H2 finger protein ATL80 (ATL80) (Arabidopsis thaliana (Mouse-ear cress)).